The following is a 347-amino-acid chain: Sulfate/thiosulfate import ATP-binding protein CysA 1 (347 aa).

One can recognise an ABC transporter domain in the interval 3–237 (VRVESLRKEF…PVSPFVYGFI (235 aa)). ATP is bound at residue 35–42 (GPSGSGKT).

This sequence belongs to the ABC transporter superfamily. Sulfate/tungstate importer (TC 3.A.1.6) family. In terms of assembly, the complex is composed of two ATP-binding proteins (CysA), two transmembrane proteins (CysT and CysW) and a solute-binding protein (CysP).

It is found in the cell inner membrane. It carries out the reaction sulfate(out) + ATP + H2O = sulfate(in) + ADP + phosphate + H(+). It catalyses the reaction thiosulfate(out) + ATP + H2O = thiosulfate(in) + ADP + phosphate + H(+). Its function is as follows. Part of the ABC transporter complex CysAWTP involved in sulfate/thiosulfate import. Responsible for energy coupling to the transport system. This is Sulfate/thiosulfate import ATP-binding protein CysA 1 from Rhizobium meliloti (strain 1021) (Ensifer meliloti).